The chain runs to 517 residues: UPF0522 protein B (517 aa).

Positions 1–19 (MNKTIILLLISIIFEIVIS) are cleaved as a signal peptide. N-linked (GlcNAc...) asparagine glycosylation is found at Asn-148, Asn-245, Asn-333, Asn-345, Asn-370, Asn-423, Asn-432, and Asn-495.

Belongs to the UPF0522 family.

Its subcellular location is the secreted. This Dictyostelium discoideum (Social amoeba) protein is UPF0522 protein B.